Reading from the N-terminus, the 262-residue chain is Cytochrome c oxidase subunit 3 (262 aa).

Helical transmembrane passes span 11 to 31 (LVEP…LTVG), 32 to 52 (LVMW…VMIV), 83 to 103 (GMVL…WAFF), 125 to 147 (LNAF…TVTW), 160 to 180 (AIQS…LQAW), 198 to 218 (FFVA…FLMV), and 240 to 260 (AWYW…IYWW).

This sequence belongs to the cytochrome c oxidase subunit 3 family. As to quaternary structure, component of the cytochrome c oxidase (complex IV, CIV), a multisubunit enzyme composed of a catalytic core of 3 subunits and several supernumerary subunits. The complex exists as a monomer or a dimer and forms supercomplexes (SCs) in the inner mitochondrial membrane with ubiquinol-cytochrome c oxidoreductase (cytochrome b-c1 complex, complex III, CIII).

The protein localises to the mitochondrion inner membrane. It catalyses the reaction 4 Fe(II)-[cytochrome c] + O2 + 8 H(+)(in) = 4 Fe(III)-[cytochrome c] + 2 H2O + 4 H(+)(out). Component of the cytochrome c oxidase, the last enzyme in the mitochondrial electron transport chain which drives oxidative phosphorylation. The respiratory chain contains 3 multisubunit complexes succinate dehydrogenase (complex II, CII), ubiquinol-cytochrome c oxidoreductase (cytochrome b-c1 complex, complex III, CIII) and cytochrome c oxidase (complex IV, CIV), that cooperate to transfer electrons derived from NADH and succinate to molecular oxygen, creating an electrochemical gradient over the inner membrane that drives transmembrane transport and the ATP synthase. Cytochrome c oxidase is the component of the respiratory chain that catalyzes the reduction of oxygen to water. Electrons originating from reduced cytochrome c in the intermembrane space (IMS) are transferred via the dinuclear copper A center (CU(A)) of subunit 2 and heme A of subunit 1 to the active site in subunit 1, a binuclear center (BNC) formed by heme A3 and copper B (CU(B)). The BNC reduces molecular oxygen to 2 water molecules using 4 electrons from cytochrome c in the IMS and 4 protons from the mitochondrial matrix. The protein is Cytochrome c oxidase subunit 3 (COIII) of Branchiostoma floridae (Florida lancelet).